A 172-amino-acid polypeptide reads, in one-letter code: Large ribosomal subunit protein uL10 (172 aa).

Belongs to the universal ribosomal protein uL10 family. Part of the ribosomal stalk of the 50S ribosomal subunit. The N-terminus interacts with L11 and the large rRNA to form the base of the stalk. The C-terminus forms an elongated spine to which L12 dimers bind in a sequential fashion forming a multimeric L10(L12)X complex.

Forms part of the ribosomal stalk, playing a central role in the interaction of the ribosome with GTP-bound translation factors. In Bradyrhizobium sp. (strain ORS 278), this protein is Large ribosomal subunit protein uL10.